Reading from the N-terminus, the 25-residue chain is Caerin-1.9 (25 aa).

Leu-25 is modified (leucine amide).

It belongs to the frog skin active peptide (FSAP) family. Caerin subfamily. Expressed by the skin dorsal glands.

The protein resides in the secreted. Functionally, antimicrobial peptide. Adopts an alpha helical conformation which can disrupt bacterial membranes. Strongly inhibits the formation of NO by neuronal nitric oxide synthase (nNOS) at micromolar concentrations. Acts by a non-competitive mechanism, probably by binding to calcium/calmodulin and as a consequence blocking calmodulin attachment to nNOS. This Ranoidea chloris (Red-eyed tree frog) protein is Caerin-1.9.